Consider the following 297-residue polypeptide: uncharacterized protein (297 aa).

The tract at residues 1–29 (MAESKAKNMFQKLSLTPKRNHEHDAGRNI) is disordered. Residues 19–29 (RNHEHDAGRNI) are compositionally biased toward basic and acidic residues.

This is an uncharacterized protein from Caenorhabditis elegans.